Consider the following 260-residue polypeptide: Thiazole synthase (260 aa).

The Schiff-base intermediate with DXP role is filled by Lys100. 1-deoxy-D-xylulose 5-phosphate-binding positions include Gly161, Ala187–Gly188, and Asn209–Thr210.

Belongs to the ThiG family. In terms of assembly, homotetramer. Forms heterodimers with either ThiH or ThiS.

The protein localises to the cytoplasm. The catalysed reaction is [ThiS sulfur-carrier protein]-C-terminal-Gly-aminoethanethioate + 2-iminoacetate + 1-deoxy-D-xylulose 5-phosphate = [ThiS sulfur-carrier protein]-C-terminal Gly-Gly + 2-[(2R,5Z)-2-carboxy-4-methylthiazol-5(2H)-ylidene]ethyl phosphate + 2 H2O + H(+). Its pathway is cofactor biosynthesis; thiamine diphosphate biosynthesis. Catalyzes the rearrangement of 1-deoxy-D-xylulose 5-phosphate (DXP) to produce the thiazole phosphate moiety of thiamine. Sulfur is provided by the thiocarboxylate moiety of the carrier protein ThiS. In vitro, sulfur can be provided by H(2)S. This chain is Thiazole synthase, found in Sorangium cellulosum (strain So ce56) (Polyangium cellulosum (strain So ce56)).